We begin with the raw amino-acid sequence, 306 residues long: D-alanine--D-alanine ligase (306 aa).

Active-site residues include Glu15 and Ser150. The ATP-grasp domain occupies 101–303; the sequence is KLLWKSLSLR…FDELILKILK (203 aa). Residue 134–189 coordinates ATP; sequence ILKLKFPVVIKPNNAGSSIGITIVNHPDLLIDSINLAFNYSNNIIIEKFLKGTEYT. Mg(2+) contacts are provided by Asp257, Glu270, and Asn272. Residue Ser281 is part of the active site.

It belongs to the D-alanine--D-alanine ligase family. The cofactor is Mg(2+). Mn(2+) is required as a cofactor.

The protein resides in the cytoplasm. The catalysed reaction is 2 D-alanine + ATP = D-alanyl-D-alanine + ADP + phosphate + H(+). The protein operates within cell wall biogenesis; peptidoglycan biosynthesis. In terms of biological role, cell wall formation. This Buchnera aphidicola subsp. Schizaphis graminum (strain Sg) protein is D-alanine--D-alanine ligase.